A 384-amino-acid chain; its full sequence is Protein NDRG1 (384 aa).

At Ser-2 the chain carries N-acetylserine. A phosphoserine mark is found at Ser-2, Ser-319, and Ser-326. The segment at 325–384 (RSRTASGSSVTSLEGARSRSHTSEGTRSRSHTSEGTRLDIIPNSGGPGSSAGPNSTEVSC) is disordered. Residues 327 to 336 (RTASGSSVTS) show a composition bias toward polar residues. Thr-328 carries the phosphothreonine; by SGK1 modification. 2 positions are modified to phosphoserine; by SGK1: Ser-330 and Ser-332. Position 333 is a phosphoserine (Ser-333). Thr-335 is subject to Phosphothreonine. A phosphoserine mark is found at Ser-336 and Ser-342. 2 tandem repeats follow at residues 339 to 348 (GARSRSHTSE) and 349 to 358 (GTRSRSHTSE). Residues 339–358 (GARSRSHTSEGTRSRSHTSE) form a 2 X 10 AA tandem repeats of G-[PST]-R-S-R-S-H-T-S-E region. Residues 345–361 (HTSEGTRSRSHTSEGTR) are compositionally biased toward basic and acidic residues. Position 346 is a phosphothreonine; by SGK1 (Thr-346). Position 352 is a phosphoserine (Ser-352). Thr-356 is subject to Phosphothreonine; by SGK1. Positions 374-384 (SAGPNSTEVSC) are enriched in low complexity.

It belongs to the NDRG family. As to quaternary structure, interacts with RAB4A (membrane-bound form); the interaction involves NDRG1 in vesicular recycling of CDH1. Interacts with APOA1, APOA2, PRA1 and RTN1. In terms of processing, under stress conditions, phosphorylated in the C-terminal on many serine and threonine residues. Phosphorylated in vitro by PKA. Phosphorylation enhanced by increased intracellular cAMP levels. Homocysteine induces dephosphorylation. Phosphorylation by SGK1 is cell cycle dependent.

Its subcellular location is the cytoplasm. The protein resides in the cytosol. It localises to the cytoskeleton. It is found in the microtubule organizing center. The protein localises to the centrosome. Its subcellular location is the nucleus. The protein resides in the cell membrane. Functionally, stress-responsive protein involved in hormone responses, cell growth, and differentiation. Acts as a tumor suppressor in many cell types. Necessary but not sufficient for p53/TP53-mediated caspase activation and apoptosis. Has a role in cell trafficking notably of the Schwann cell and is necessary for the maintenance and development of the peripheral nerve myelin sheath. Required for vesicular recycling of CDH1 and TF. May also function in lipid trafficking. Protects cells from spindle disruption damage. Functions in p53/TP53-dependent mitotic spindle checkpoint. Regulates microtubule dynamics and maintains euploidy. The sequence is that of Protein NDRG1 (NDRG1) from Bos taurus (Bovine).